We begin with the raw amino-acid sequence, 761 residues long: 52 kDa repressor of the inhibitor of the protein kinase (761 aa).

A THAP-type zinc finger spans residues 1–86 (MPNFCAAPNC…LRDNAIPTIF (86 aa)). Positions 116–132 (QKKIDETSEQEQKHKET) are enriched in basic and acidic residues. Residues 116–149 (QKKIDETSEQEQKHKETNNSNAQNPSEEEGEGQD) are disordered. Residue S566 is modified to Phosphoserine.

Interacts with DNAJC3, probably sequestring it.

In terms of biological role, upstream regulator of interferon-induced serine/threonine protein kinase R (PKR). May block the PKR-inhibitory function of DNAJC3, resulting in restoration of kinase activity and suppression of cell growth. This Homo sapiens (Human) protein is 52 kDa repressor of the inhibitor of the protein kinase.